The following is a 432-amino-acid chain: Adenylosuccinate synthetase (432 aa).

GTP contacts are provided by residues 12–18 and 40–42; these read GDEGKGK and GHT. Residue Asp-13 is the Proton acceptor of the active site. Residues Asp-13 and Gly-40 each contribute to the Mg(2+) site. IMP is bound by residues 13–16, 38–41, Thr-132, Arg-146, Gln-226, Thr-241, and Arg-305; these read DEGK and NAGH. His-41 (proton donor) is an active-site residue. A substrate-binding site is contributed by 301–307; that stretch reads TVTGRKR. Residues Arg-307, 333 to 335, and 415 to 417 contribute to the GTP site; these read KLD and STS.

This sequence belongs to the adenylosuccinate synthetase family. Homodimer. The cofactor is Mg(2+).

Its subcellular location is the cytoplasm. The enzyme catalyses IMP + L-aspartate + GTP = N(6)-(1,2-dicarboxyethyl)-AMP + GDP + phosphate + 2 H(+). The protein operates within purine metabolism; AMP biosynthesis via de novo pathway; AMP from IMP: step 1/2. Its function is as follows. Plays an important role in the de novo pathway of purine nucleotide biosynthesis. Catalyzes the first committed step in the biosynthesis of AMP from IMP. The polypeptide is Adenylosuccinate synthetase (Agrobacterium fabrum (strain C58 / ATCC 33970) (Agrobacterium tumefaciens (strain C58))).